We begin with the raw amino-acid sequence, 212 residues long: Proheparin-binding EGF-like growth factor (212 aa).

An N-terminal signal peptide occupies residues 1–18 (MDGRVVLIHALLTAVCSA). The Extracellular segment spans residues 19-167 (AVGKFGRDGP…PSTYDHTTAL (149 aa)). The interval 82-108 (SKPQGPVTPKKKGNGNKRRKGKGLGKK) is disordered. Positions 90-106 (PKKKGNGNKRRKGKGLG) are enriched in basic residues. The EGF-like domain occupies 108–148 (KRDPCLRKYKDFCIHGECKYIRELGAPSCICQPGYHGERCH). 3 disulfides stabilise this stretch: cysteine 112–cysteine 125, cysteine 120–cysteine 136, and cysteine 138–cysteine 147. A propeptide spans 153–212 (PVEHPPSTYDHTTALAVVAVVLSSLCLVIITALLMFRCHKRGVYDVENEEKIKLGITVNH) (C-terminal). Residues 168–188 (AVVAVVLSSLCLVIITALLMF) form a helical membrane-spanning segment. Residues 189–212 (RCHKRGVYDVENEEKIKLGITVNH) lie on the Cytoplasmic side of the membrane.

As to quaternary structure, interacts with CNIH2.

It localises to the secreted. Its subcellular location is the extracellular space. The protein resides in the cell membrane. Functionally, may be involved in macrophage-mediated cellular proliferation. It is mitogenic for fibroblasts and smooth muscle but not endothelial cells. It is able to bind EGF receptor/EGFR with higher affinity than EGF itself and is a far more potent mitogen for smooth muscle cells than EGF. Plays an important role in the proper development of cranial nerves by inhibiting the migration of the cranial neural crest cells (NCCs) into the odd-numbered neuromeres (r3 and r5) of the hindbrain Plays a role in mediating v-Jun-induced oncogenic transformation. In Gallus gallus (Chicken), this protein is Proheparin-binding EGF-like growth factor (HBEGF).